Reading from the N-terminus, the 411-residue chain is Glutamate dehydrogenase (411 aa).

Lys102 is an active-site residue.

The protein belongs to the Glu/Leu/Phe/Val dehydrogenases family.

The catalysed reaction is L-glutamate + NAD(+) + H2O = 2-oxoglutarate + NH4(+) + NADH + H(+). It catalyses the reaction L-glutamate + NADP(+) + H2O = 2-oxoglutarate + NH4(+) + NADPH + H(+). This is Glutamate dehydrogenase (GDH) from Vitis vinifera (Grape).